Here is a 305-residue protein sequence, read N- to C-terminus: MKVAIAGYGDLTRYICEEFVQAGHELVILTRSFKPQIESPGISQAITDYTISSLKATLADCEVLISTIGDMSNAYTSVHHTLIQACQESPKCKRFIPAEFAVNIETYPDEPGFYYAIHEPVRETLRNQTNLEWTLVCIGWLADYFVPSKNRYIKDIDECHPINWKANKAVIPGTGNEPVDFTWARDVAKGLASLIQAPTGSWEPYTFMSGERSCWNDMAALIKEKYRPDMPIEHVSLHATANMIKAAKDEDTLILADYYLLSISQACAIPQDKAKAHKEKFFPHIHFRTLREGLSQFDEKPNSIM.

Belongs to the NmrA-type oxidoreductase family. Isoflavone reductase subfamily.

It catalyses the reaction L-pipecolate + O2 = L-1-piperideine-6-carboxylate + H2O2 + H(+). The protein operates within mycotoxin biosynthesis. Functionally, oxidoreductase; part of the gene cluster that mediates the biosynthesis of swainsonine (SW), a cytotoxic fungal alkaloid and a potential cancer therapy drug. Swainsonine production occurs via a multibranched pathway and is dispensable for fungal colonization of plants and infection of insect hosts. The first step of swainsonine biosynthesis is the production of the precursor pipecolic acid (PA) via conversion of L-lysine (Lys) to 1-piperideine-6-carboxylate (P6C) by the aminotransferase swnA, the latter being further reduced to PA by the reductase swnR. The PKS-NRPS hybrid synthetase swnK uptakes and condensates PA and malonyl-CoA with and without skipping of the ketoreductase (KR) domain in order to produce 3 intermediates, 1-oxoindolizidine, (1S)-1-hydroxyindolizin, and (1R)-1-hydroxyindolizine; with the transisomer (1S)-1-hydroxyindolizin being predominant. The terminal thioester reductase (TE) domain of swnK is involved in reduction of the thioester bond to release the intermediate aldehydes. The oxidoreductase swnN could contribute to the reduction of 1-oxoindolizidine to (1S)-1-hydroxyindolizin and (1R)-1-hydroxyindolizine, contributing to the major route of SW production. The dioxygenase swnH2 would be responsible for the oxidization of (1R)-1-hydroxyindolizine into (1R,2S)-1,2-dihydroxyindolizine and of (1S)-1-hydroxyindolizin to yield both (1R,2S)-1,2-dihydroxyindolizine and (1S,2S)-1,2-dihydroxyindolizine. The dioxygenase swnH1 then performs the conversion of the 1,2-dihydroxyindolizine epimers to SW. This Arthroderma benhamiae (strain ATCC MYA-4681 / CBS 112371) (Trichophyton mentagrophytes) protein is Oxidoreductase swnR.